Here is a 677-residue protein sequence, read N- to C-terminus: DNA ligase (677 aa).

NAD(+) contacts are provided by residues 43 to 47 (DHVYD), 92 to 93 (SM), and Glu-122. Lys-124 functions as the N6-AMP-lysine intermediate in the catalytic mechanism. NAD(+) is bound by residues Arg-145, Glu-179, Lys-295, and Lys-319. Residues Cys-413, Cys-416, Cys-431, and Cys-436 each coordinate Zn(2+). A BRCT domain is found at 599-677 (TSDSYFNGKT…EADLDNYLAQ (79 aa)).

The protein belongs to the NAD-dependent DNA ligase family. LigA subfamily. Requires Mg(2+) as cofactor. It depends on Mn(2+) as a cofactor.

It catalyses the reaction NAD(+) + (deoxyribonucleotide)n-3'-hydroxyl + 5'-phospho-(deoxyribonucleotide)m = (deoxyribonucleotide)n+m + AMP + beta-nicotinamide D-nucleotide.. Its function is as follows. DNA ligase that catalyzes the formation of phosphodiester linkages between 5'-phosphoryl and 3'-hydroxyl groups in double-stranded DNA using NAD as a coenzyme and as the energy source for the reaction. It is essential for DNA replication and repair of damaged DNA. The polypeptide is DNA ligase (Latilactobacillus sakei subsp. sakei (strain 23K) (Lactobacillus sakei subsp. sakei)).